A 273-amino-acid polypeptide reads, in one-letter code: Proteasome subunit alpha (273 aa).

The segment at 231–273 is disordered; that stretch reads DDGAAGQPPSSSDTDTSAAEARKPTASAGSADLEGPEPERPDS. Residues 238 to 249 show a composition bias toward low complexity; it reads PPSSSDTDTSAA.

Belongs to the peptidase T1A family. The 20S proteasome core is composed of 14 alpha and 14 beta subunits that assemble into four stacked heptameric rings, resulting in a barrel-shaped structure. The two inner rings, each composed of seven catalytic beta subunits, are sandwiched by two outer rings, each composed of seven alpha subunits. The catalytic chamber with the active sites is on the inside of the barrel. Has a gated structure, the ends of the cylinder being occluded by the N-termini of the alpha-subunits. Is capped by the proteasome-associated ATPase, ARC.

The protein localises to the cytoplasm. Its pathway is protein degradation; proteasomal Pup-dependent pathway. The formation of the proteasomal ATPase ARC-20S proteasome complex, likely via the docking of the C-termini of ARC into the intersubunit pockets in the alpha-rings, may trigger opening of the gate for substrate entry. Interconversion between the open-gate and close-gate conformations leads to a dynamic regulation of the 20S proteasome proteolysis activity. Its function is as follows. Component of the proteasome core, a large protease complex with broad specificity involved in protein degradation. The protein is Proteasome subunit alpha of Salinispora arenicola (strain CNS-205).